A 412-amino-acid chain; its full sequence is MIIELDEFTRVEGNGKAEIVIENGEVKDARVKIVEGPRFFEILTLGRDYWDVPDLEARICAICYIAHSVASVRAIEKALGIDVPESVEKLRELALWGEIIESHALHLYLLALPDVFGYPDAISMIPRHGELVKEGLTIKAFGNAIRELIGGREIHGINIKPGGFGRYPSEEELEKIAEHSKSLIKFARRIVGIFASQEAGGAVGEVLMATSDYLWGDELIINGERVQYYEVDEVPVGYSFAKHSYYKGNPVFVGALPRLLLKGESIEGEAARMLEEYRDKLESKYVIYNNLAQAIELLYALERVPQLVEEILSEGIERGNGEISQESGEGVGYVEAPRGVLVHHYRIENGKVVWSNTITPTAFNQRLMELSLLEEAKRLYGSESEENMKKRLEVIVRAFDPCISCSVHFVKL.

Cys60, Cys63, Cys402, and Cys405 together coordinate Ni(2+). Cys63 lines the Fe cation pocket. Position 405 (Cys405) interacts with Fe cation.

The protein belongs to the [NiFe]/[NiFeSe] hydrogenase large subunit family. As to quaternary structure, dimer of heterotetramer of alpha, beta, gamma and delta subunits. The nickel-containing alpha and delta subunits constitute the hydrogenase activity. The beta and gamma subunits (flavin-containing dimer) constitute the sulfur reductase activity. The cofactor is Ni(2+). Requires Fe cation as cofactor.

Its subcellular location is the cytoplasm. The enzyme catalyses H2 + NADP(+) = NADPH + H(+). It catalyses the reaction H2 + NAD(+) = NADH + H(+). In terms of biological role, part of a bifunctional enzyme complex that functions as a hydrogen-evolving hydrogenase with sulfur-reducing activity. May play a role in hydrogen cycling during fermentative growth. Activity exhibited with NAD in addition to NADPH. The alpha and delta subunits form the hydrogenase component that catalyzes the reduction of protons to evolve hydrogen. The polypeptide is Sulfhydrogenase 2 subunit alpha (Pyrococcus furiosus (strain ATCC 43587 / DSM 3638 / JCM 8422 / Vc1)).